The following is a 348-amino-acid chain: SUMO-activating enzyme subunit 1 (348 aa).

Belongs to the ubiquitin-activating E1 family. Heterodimer of sae1 and uba2/sae2. The heterodimer corresponds to the two domains that are encoded on a single polypeptide chain in ubiquitin-activating enzyme E1. Interacts with ube2i.

The protein resides in the nucleus. The protein operates within protein modification; protein sumoylation. The heterodimer acts as an E1 ligase for sumo1, sumo2, and sumo3. It mediates ATP-dependent activation of sumo proteins followed by formation of a thioester bond between a sumo protein and a conserved active site cysteine residue on uba2/sae2. The chain is SUMO-activating enzyme subunit 1 (sae1) from Danio rerio (Zebrafish).